Reading from the N-terminus, the 427-residue chain is Trigger factor (427 aa).

Positions 160–240 (GDTLIGDVTK…VKEVKRLELP (81 aa)) constitute a PPIase FKBP-type domain.

Belongs to the FKBP-type PPIase family. Tig subfamily.

The protein localises to the cytoplasm. The enzyme catalyses [protein]-peptidylproline (omega=180) = [protein]-peptidylproline (omega=0). Functionally, involved in protein export. Acts as a chaperone by maintaining the newly synthesized protein in an open conformation. Functions as a peptidyl-prolyl cis-trans isomerase. The chain is Trigger factor from Chlorobaculum parvum (strain DSM 263 / NCIMB 8327) (Chlorobium vibrioforme subsp. thiosulfatophilum).